An 84-amino-acid polypeptide reads, in one-letter code: Small ribosomal subunit protein uS17 (84 aa).

It belongs to the universal ribosomal protein uS17 family. As to quaternary structure, part of the 30S ribosomal subunit.

Functionally, one of the primary rRNA binding proteins, it binds specifically to the 5'-end of 16S ribosomal RNA. This chain is Small ribosomal subunit protein uS17, found in Karelsulcia muelleri (strain GWSS) (Sulcia muelleri).